A 536-amino-acid polypeptide reads, in one-letter code: Proto-oncogene tyrosine-protein kinase Src (536 aa).

The segment at 1-53 is disordered; that stretch reads MGSNKSKPKDASQRRRSLEPAENVHGAGGGAFPASQTPSKPASADGHRGPSAA. The N-myristoyl glycine moiety is linked to residue Gly-2. Residues 7-19 show a composition bias toward basic and acidic residues; sequence KPKDASQRRRSLE. Ser-17 is modified (phosphoserine). Position 75 is a phosphoserine; by CDK5 (Ser-75). An SH3 domain is found at 84–145; sequence GGVTTFVALY…PSNYVAPSDS (62 aa). The SH2 domain occupies 151 to 248; the sequence is WYFGKITRRE…GLCHRLTTVC (98 aa). Tyr-187 carries the post-translational modification Phosphotyrosine. The Protein kinase domain maps to 270-523; the sequence is LRLEVKLGQG…YLQAFLEDYF (254 aa). Residues 276-284 and Lys-298 contribute to the ATP site; that span reads LGQGCFGEV. The active-site Proton acceptor is Asp-389. The residue at position 419 (Tyr-419) is a Phosphotyrosine; by autocatalysis. At Tyr-419 the chain carries Phosphotyrosine; by FAK2. At Tyr-530 the chain carries Phosphotyrosine; by CSK.

The protein belongs to the protein kinase superfamily. Tyr protein kinase family. SRC subfamily. As to quaternary structure, part of a complex comprised of PTPRA, BCAR1, BCAR3 (via SH2 domain) and SRC; the formation of the complex is dependent on integrin mediated-tyrosine phosphorylation of PTPRA. Interacts with DDEF1/ASAP1; via the SH3 domain. Interacts with CCPG1. Identified in a complex containing FGFR4, NCAM1, CDH2, PLCG1, FRS2, SRC, SHC1, GAP43 and CTTN. Interacts with ERBB2, STAT1 and PNN. Interacts with DDR1, DDR2 and DAB2. Interacts with CDCP1, TGFB1I1 and TOM1L2. Interacts with the cytoplasmic domain of MUC1, phosphorylates it and increases binding of MUC1 with beta-catenin. Interacts with RALGPS1; via the SH3 domain. Interacts with CAV2 (tyrosine phosphorylated form). Interacts (via the SH3 domain and the protein kinase domain) with ARRB1; the interaction is independent of the phosphorylation state of SRC C-terminus. Interacts with ARRB1 and ARRB2. Interacts with SRCIN1. Interacts with NDFIP2 and more weakly with NDFIP1. Interacts with PIK3CA and/or PIK3C2B, PTK2/FAK1 and ESR1 (dimethylated on arginine). Interacts with FASLG. Interacts (via SH2 domain) with the 'Tyr-402' phosphorylated form of PTK2B/PYK2. Interacts (via SH2 domain) with FLT3 (tyrosine phosphorylated). Interacts with PDGFRA (tyrosine phosphorylated). Interacts with CSF1R. Interacts (via SH2 and SH3 domain) with TNK2. Interacts (via protein kinase domain) with the tyrosine phosphorylated form of RUNX3 (via runt domain). Interacts with TRAF3 (via RING-type zinc finger domain). Interacts with RIGI, MAVS and TBK1. Interacts (via SH2 domain) with RACK1; the interaction is enhanced by tyrosine phosphorylation of RACK1 and inhibits SRC activity. Interacts with EPHB1; activates the MAPK/ERK cascade to regulate cell migration. Interacts with FCAMR. Interacts (via SH2 domain) with the 'Tyr-9' phosphorylated form of PDPK1. Interacts with AMOTL2; this interaction regulates the translocation of phosphorylated SRC to peripheral cell-matrix adhesion sites. Interacts with TRAP1. Interacts with CBLC; the interaction is enhanced when SRC is phosphorylated at Tyr-419. Interacts with ARHGEF5. Interacts (via cytoplasmic domain) with CEACAM1 (via SH2 domain); this interaction is regulated by trans-homophilic cell adhesion. Interacts with MPP2. Interacts with PRR7. Interacts (via kinase domain and to a lesser extent the SH2 domain) directly with PDLIM4; this interaction results in PTPN13-mediated dephosphorylation of this protein leading to its inactivation. Interacts with P85 (PIK3R1 or PIK3R2). Interacts with HNRNPA2B1. Interacts with IL6ST/gp130. Interacts (via SH3 domain) with PELP1 in the presence of 17-beta-estradiol. Interacts with AMBRA1. (Microbial infection) Interacts with HEV ORF3 protein; via the SH3 domain. In terms of assembly, (Microbial infection) Interacts (via SH2 domain) with HCV non-structural protein 5A (via N-terminus). Post-translationally, myristoylated at Gly-2, and this is essential for targeting to membranes. Dephosphorylated at Tyr-530 by PTPRJ. Phosphorylated on Tyr-530 by c-Src kinase (CSK). The phosphorylated form is termed pp60c-src. Dephosphorylated by PTPRJ at Tyr-419. Normally maintained in an inactive conformation with the SH2 domain engaged with Tyr-530, the SH3 domain engaged with the SH2-kinase linker, and Tyr-419 dephosphorylated. Dephosphorylation of Tyr-530 as a result of protein tyrosine phosphatase (PTP) action disrupts the intramolecular interaction between the SH2 domain and Tyr-530, Tyr-419 can then become autophosphorylated, resulting in SRC activation. Phosphorylation of Tyr-530 by CSK allows this interaction to reform, resulting in SRC inactivation. CDK5-mediated phosphorylation at Ser-75 targets SRC to ubiquitin-dependent degradation and thus leads to cytoskeletal reorganization. Phosphorylated by PTK2/FAK1; this enhances kinase activity. Phosphorylated by PTK2B/PYK2; this enhances kinase activity. Upon activation of IL6ST by IL6, Tyr-419 is phosphorylated and Tyr-530 dephosphorylated. In terms of processing, displays reduced levels of autophosphorylation at Tyr-419 compared to isoforms 2 and 3. Post-translationally, displays enhanced levels of autophosphorylation at Tyr-419 compared to isoform 1. Displays enhanced levels of autophosphorylation at Tyr-419 compared to isoform 1. Shows reduced phosphorylation at Tyr-527 compared to isoforms 1 and 2. In terms of processing, S-nitrosylation is important for activation of its kinase activity. Post-translationally, ubiquitinated in response to CDK5-mediated phosphorylation. Ubiquitination mediated by CBLC requires SRC autophosphorylation at Tyr-419 and may lead to lysosomal degradation. Expressed ubiquitously. Expressed in the skin (at protein level). Platelets, neurons and osteoclasts express 5-fold to 200-fold higher levels than most other tissues. As to expression, expressed in spleen and liver. In terms of tissue distribution, expressed in brain.

It is found in the cell membrane. The protein resides in the mitochondrion inner membrane. Its subcellular location is the nucleus. The protein localises to the cytoplasm. It localises to the cytoskeleton. It is found in the perinuclear region. The protein resides in the cell junction. Its subcellular location is the focal adhesion. The catalysed reaction is L-tyrosyl-[protein] + ATP = O-phospho-L-tyrosyl-[protein] + ADP + H(+). Its activity is regulated as follows. Phosphorylation by CSK at Tyr-530 inhibits kinase activity. Inhibitory phosphorylation at Tyr-530 is enhanced by heme. Further phosphorylation by CDK1 partially reactivates CSK-inactivated SRC and facilitates complete reactivation by protein tyrosine phosphatase PTPRC. Integrin engagement stimulates kinase activity. Phosphorylation by PTK2/FAK1 enhances kinase activity. Butein and pseudosubstrate-based peptide inhibitors like CIYKYYF act as inhibitors. Phosphorylation at Tyr-419 increases kinase activity. Functionally, non-receptor protein tyrosine kinase which is activated following engagement of many different classes of cellular receptors including immune response receptors, integrins and other adhesion receptors, receptor protein tyrosine kinases, G protein-coupled receptors as well as cytokine receptors. Participates in signaling pathways that control a diverse spectrum of biological activities including gene transcription, immune response, cell adhesion, cell cycle progression, apoptosis, migration, and transformation. Due to functional redundancy between members of the SRC kinase family, identification of the specific role of each SRC kinase is very difficult. SRC appears to be one of the primary kinases activated following engagement of receptors and plays a role in the activation of other protein tyrosine kinase (PTK) families. Receptor clustering or dimerization leads to recruitment of SRC to the receptor complexes where it phosphorylates the tyrosine residues within the receptor cytoplasmic domains. Plays an important role in the regulation of cytoskeletal organization through phosphorylation of specific substrates such as AFAP1. Phosphorylation of AFAP1 allows the SRC SH2 domain to bind AFAP1 and to localize to actin filaments. Cytoskeletal reorganization is also controlled through the phosphorylation of cortactin (CTTN). When cells adhere via focal adhesions to the extracellular matrix, signals are transmitted by integrins into the cell resulting in tyrosine phosphorylation of a number of focal adhesion proteins, including PTK2/FAK1 and paxillin (PXN). In addition to phosphorylating focal adhesion proteins, SRC is also active at the sites of cell-cell contact adherens junctions and phosphorylates substrates such as beta-catenin (CTNNB1), delta-catenin (CTNND1), and plakoglobin (JUP). Another type of cell-cell junction, the gap junction, is also a target for SRC, which phosphorylates connexin-43 (GJA1). SRC is implicated in regulation of pre-mRNA-processing and phosphorylates RNA-binding proteins such as KHDRBS1. Phosphorylates PKP3 at 'Tyr-195' in response to reactive oxygen species, which may cause the release of PKP3 from desmosome cell junctions into the cytoplasm. Also plays a role in PDGF-mediated tyrosine phosphorylation of both STAT1 and STAT3, leading to increased DNA binding activity of these transcription factors. Involved in the RAS pathway through phosphorylation of RASA1 and RASGRF1. Plays a role in EGF-mediated calcium-activated chloride channel activation. Required for epidermal growth factor receptor (EGFR) internalization through phosphorylation of clathrin heavy chain (CLTC and CLTCL1) at 'Tyr-1477'. Involved in beta-arrestin (ARRB1 and ARRB2) desensitization through phosphorylation and activation of GRK2, leading to beta-arrestin phosphorylation and internalization. Has a critical role in the stimulation of the CDK20/MAPK3 mitogen-activated protein kinase cascade by epidermal growth factor. Might be involved not only in mediating the transduction of mitogenic signals at the level of the plasma membrane but also in controlling progression through the cell cycle via interaction with regulatory proteins in the nucleus. Plays an important role in osteoclastic bone resorption in conjunction with PTK2B/PYK2. Both the formation of a SRC-PTK2B/PYK2 complex and SRC kinase activity are necessary for this function. Recruited to activated integrins by PTK2B/PYK2, thereby phosphorylating CBL, which in turn induces the activation and recruitment of phosphatidylinositol 3-kinase to the cell membrane in a signaling pathway that is critical for osteoclast function. Promotes energy production in osteoclasts by activating mitochondrial cytochrome C oxidase. Phosphorylates DDR2 on tyrosine residues, thereby promoting its subsequent autophosphorylation. Phosphorylates RUNX3 and COX2 on tyrosine residues, TNK2 on 'Tyr-284' and CBL on 'Tyr-731'. Enhances RIGI-elicited antiviral signaling. Phosphorylates PDPK1 at 'Tyr-9', 'Tyr-373' and 'Tyr-376'. Phosphorylates BCAR1 at 'Tyr-128'. Phosphorylates CBLC at multiple tyrosine residues, phosphorylation at 'Tyr-341' activates CBLC E3 activity. Phosphorylates synaptic vesicle protein synaptophysin (SYP). Involved in anchorage-independent cell growth. Required for podosome formation. Mediates IL6 signaling by activating YAP1-NOTCH pathway to induce inflammation-induced epithelial regeneration. Phosphorylates OTUB1, promoting deubiquitination of RPTOR. Phosphorylates caspase CASP8 at 'Tyr-380' which negatively regulates CASP8 processing and activation, down-regulating CASP8 proapoptotic function. In terms of biological role, non-receptor protein tyrosine kinase which phosphorylates synaptophysin with high affinity. Non-receptor protein tyrosine kinase which shows higher basal kinase activity than isoform 1, possibly due to weakened intramolecular interactions which enhance autophosphorylation of Tyr-419 and subsequent activation. The SH3 domain shows reduced affinity with the linker sequence between the SH2 and kinase domains which may account for the increased basal activity. Displays altered substrate specificity compared to isoform 1, showing weak affinity for synaptophysin and for peptide substrates containing class I or class II SH3 domain-binding motifs. Plays a role in L1CAM-mediated neurite elongation, possibly by acting downstream of L1CAM to drive cytoskeletal rearrangements involved in neurite outgrowth. Its function is as follows. Non-receptor protein tyrosine kinase which shows higher basal kinase activity than isoform 1, possibly due to weakened intramolecular interactions which enhance autophosphorylation of Tyr-419 and subsequent activation. The SH3 domain shows reduced affinity with the linker sequence between the SH2 and kinase domains which may account for the increased basal activity. Displays altered substrate specificity compared to isoform 1, showing weak affinity for synaptophysin and for peptide substrates containing class I or class II SH3 domain-binding motifs. Plays a role in neurite elongation. This is Proto-oncogene tyrosine-protein kinase Src from Homo sapiens (Human).